Consider the following 213-residue polypeptide: MVEQYLSVFLKAVFVENLALAFFLGMCTFLAVSKNVKTAIGLGIAVIAIETITVPANQLIYSLLLKKGALTWVNDYLISTDTYNFAEVDLTFLGFISYIGVIAAMVQILEMFLDRFMPSLYNALGIFLPLITVNCAILGASLFMEQREYPFGESVVFGFGCGVGWALAIMALAGIREKLKYSDVPPPLRGLGITFITVGLMSLAFMSFSGIQL.

6 consecutive transmembrane segments (helical) span residues 12–32 (AVFV…FLAV), 40–60 (IGLG…NQLI), 92–112 (FLGF…LEMF), 124–144 (LGIF…SLFM), 155–175 (VVFG…LAGI), and 191–211 (LGIT…FSGI).

It belongs to the NqrDE/RnfAE family. As to quaternary structure, composed of six subunits; NqrA, NqrB, NqrC, NqrD, NqrE and NqrF.

It localises to the cell inner membrane. The catalysed reaction is a ubiquinone + n Na(+)(in) + NADH + H(+) = a ubiquinol + n Na(+)(out) + NAD(+). NQR complex catalyzes the reduction of ubiquinone-1 to ubiquinol by two successive reactions, coupled with the transport of Na(+) ions from the cytoplasm to the periplasm. NqrA to NqrE are probably involved in the second step, the conversion of ubisemiquinone to ubiquinol. The protein is Na(+)-translocating NADH-quinone reductase subunit E of Rhodopirellula baltica (strain DSM 10527 / NCIMB 13988 / SH1).